The sequence spans 251 residues: 14-3-3-like protein (251 aa).

It belongs to the 14-3-3 family.

This chain is 14-3-3-like protein, found in Fucus vesiculosus (Bladder wrack).